Reading from the N-terminus, the 715-residue chain is Fatty acid oxidation complex subunit alpha (715 aa).

The tract at residues 1–190 (MTTTSAFMLN…KAGLVDDVVP (190 aa)) is enoyl-CoA hydratase. A 3-hydroxyacyl-CoA dehydrogenase region spans residues 306–715 (GPLNSVGILG…WTNGETDQGN (410 aa)).

The protein in the N-terminal section; belongs to the enoyl-CoA hydratase/isomerase family. It in the central section; belongs to the 3-hydroxyacyl-CoA dehydrogenase family. As to quaternary structure, heterotetramer of two alpha chains (FadJ) and two beta chains (FadI).

It is found in the cytoplasm. It catalyses the reaction a (3S)-3-hydroxyacyl-CoA = a (2E)-enoyl-CoA + H2O. It carries out the reaction a 4-saturated-(3S)-3-hydroxyacyl-CoA = a (3E)-enoyl-CoA + H2O. The enzyme catalyses a (3S)-3-hydroxyacyl-CoA + NAD(+) = a 3-oxoacyl-CoA + NADH + H(+). The catalysed reaction is (3S)-3-hydroxybutanoyl-CoA = (3R)-3-hydroxybutanoyl-CoA. It functions in the pathway lipid metabolism; fatty acid beta-oxidation. Catalyzes the formation of a hydroxyacyl-CoA by addition of water on enoyl-CoA. Also exhibits 3-hydroxyacyl-CoA epimerase and 3-hydroxyacyl-CoA dehydrogenase activities. The polypeptide is Fatty acid oxidation complex subunit alpha (Salmonella newport (strain SL254)).